A 256-amino-acid polypeptide reads, in one-letter code: Na(+)-translocating NADH-quinone reductase subunit C (256 aa).

The helical transmembrane segment at 12-32 (LGVVIGLSLVCSIIVSTAAVG) threads the bilayer. Thr-224 carries the FMN phosphoryl threonine modification.

The protein belongs to the NqrC family. In terms of assembly, composed of six subunits; NqrA, NqrB, NqrC, NqrD, NqrE and NqrF. Requires FMN as cofactor.

The protein localises to the cell inner membrane. The catalysed reaction is a ubiquinone + n Na(+)(in) + NADH + H(+) = a ubiquinol + n Na(+)(out) + NAD(+). This reaction is tightly coupled to the Na(+) pumping activity and specifically requires Na(+) for activity. Inhibited by korormicin and 2-N-heptyl-4-hydroxyquinoline N-oxide (HQNO). Its function is as follows. NQR complex catalyzes the reduction of ubiquinone-1 to ubiquinol by two successive reactions, coupled with the transport of Na(+) ions from the cytoplasm to the periplasm. NqrA to NqrE are probably involved in the second step, the conversion of ubisemiquinone to ubiquinol. This Vibrio alginolyticus protein is Na(+)-translocating NADH-quinone reductase subunit C.